The chain runs to 790 residues: Potassium transporter 22 (790 aa).

Residues 1–64 (MAQQQGQGAG…HGEGWARTLR (64 aa)) lie on the Cytoplasmic side of the membrane. Residues 65-85 (LAFQCFGVLYGDIGTSPLYVY) traverse the membrane as a helical segment. Residues 86–98 (STTFDGGIRHTDD) lie on the Extracellular side of the membrane. Residues 99–119 (LLGVLSLIIYSFLLFTIIKYV) form a helical membrane-spanning segment. Topologically, residues 120–198 (YIALRANDDG…DLLENSRPVR (79 aa)) are cytoplasmic. A helical transmembrane segment spans residues 199–219 (ISLFLLTILATAMVISDACLT). Topologically, residues 220–236 (PAISVLSAVGGLKDKAP) are extracellular. A helical membrane pass occupies residues 237-257 (HLNTEQVVWVTVGILVMLFAV). At 258–264 (QRFGTDK) the chain is on the cytoplasmic side. Residues 265–285 (VGYLFAPVVLLWLLLIGGVGV) form a helical membrane-spanning segment. At 286–318 (YNLAAHDVGVLRAFNPKYILDYFRRNGRHGWVS) the chain is on the extracellular side. A helical transmembrane segment spans residues 319–339 (LGGVLLCFTGTEALFADLGCF). Topologically, residues 340–345 (SIRSIQ) are cytoplasmic. A helical membrane pass occupies residues 346 to 366 (LSFAFGLVPAVLLAYAGQAAY). At 367 to 385 (LRVYPDHVGDAFYASTPQV) the chain is on the extracellular side. A helical membrane pass occupies residues 386-406 (LFWPTLVLALAASVVGSQAMI). The Cytoplasmic portion of the chain corresponds to 407-437 (SCAFATISHSQAMGCFPRVKVVHTSRQYQGQ). A helical transmembrane segment spans residues 438-458 (VYIPEINLLLGAAACVVTVAA). At 459-469 (RDTVVIGEAHG) the chain is on the extracellular side. The helical transmembrane segment at 470 to 490 (ICVVLVMLITTLLLTVVMVLV) threads the bilayer. At 491-492 (WR) the chain is on the cytoplasmic side. The chain crosses the membrane as a helical span at residues 493–513 (VNIGWVLVFACVFASTESVYL). The Extracellular portion of the chain corresponds to 514 to 519 (TSVLYK). The helical transmembrane segment at 520-540 (FAHGGYIPVAMSAVLMGVMGV) threads the bilayer. Residues 541-790 (WHYVHVRRYK…LLKVGMSYEI (250 aa)) lie on the Cytoplasmic side of the membrane.

Belongs to the HAK/KUP transporter (TC 2.A.72.3) family.

Its subcellular location is the membrane. Its function is as follows. High-affinity potassium transporter. This Oryza sativa subsp. japonica (Rice) protein is Potassium transporter 22 (HAK22).